Reading from the N-terminus, the 314-residue chain is Acetyl-coenzyme A carboxylase carboxyl transferase subunit alpha (314 aa).

The region spanning 32-289 is the CoA carboxyltransferase C-terminal domain; the sequence is EIDMLEASLA…KRTFESHLSE (258 aa).

It belongs to the AccA family. Acetyl-CoA carboxylase is a heterohexamer composed of biotin carboxyl carrier protein (AccB), biotin carboxylase (AccC) and two subunits each of ACCase subunit alpha (AccA) and ACCase subunit beta (AccD).

The protein resides in the cytoplasm. It carries out the reaction N(6)-carboxybiotinyl-L-lysyl-[protein] + acetyl-CoA = N(6)-biotinyl-L-lysyl-[protein] + malonyl-CoA. It participates in lipid metabolism; malonyl-CoA biosynthesis; malonyl-CoA from acetyl-CoA: step 1/1. Its function is as follows. Component of the acetyl coenzyme A carboxylase (ACC) complex. First, biotin carboxylase catalyzes the carboxylation of biotin on its carrier protein (BCCP) and then the CO(2) group is transferred by the carboxyltransferase to acetyl-CoA to form malonyl-CoA. The sequence is that of Acetyl-coenzyme A carboxylase carboxyl transferase subunit alpha from Staphylococcus saprophyticus subsp. saprophyticus (strain ATCC 15305 / DSM 20229 / NCIMB 8711 / NCTC 7292 / S-41).